We begin with the raw amino-acid sequence, 443 residues long: ATP-dependent protease ATPase subunit HslU (443 aa).

ATP contacts are provided by residues isoleucine 18, 60–65 (GVGKTE), aspartate 256, glutamate 321, and arginine 393.

It belongs to the ClpX chaperone family. HslU subfamily. As to quaternary structure, a double ring-shaped homohexamer of HslV is capped on each side by a ring-shaped HslU homohexamer. The assembly of the HslU/HslV complex is dependent on binding of ATP.

Its subcellular location is the cytoplasm. ATPase subunit of a proteasome-like degradation complex; this subunit has chaperone activity. The binding of ATP and its subsequent hydrolysis by HslU are essential for unfolding of protein substrates subsequently hydrolyzed by HslV. HslU recognizes the N-terminal part of its protein substrates and unfolds these before they are guided to HslV for hydrolysis. This chain is ATP-dependent protease ATPase subunit HslU, found in Tolumonas auensis (strain DSM 9187 / NBRC 110442 / TA 4).